Reading from the N-terminus, the 412-residue chain is Alpha-ketoglutarate-dependent sulfonate dioxygenase (412 aa).

Ser-52 bears the Phosphoserine mark. Residues His-218 and Asp-220 each contribute to the Fe cation site. The 2-oxoglutarate site is built by Thr-245 and Trp-352. Residue His-367 participates in Fe cation binding. Residues Arg-379 and Arg-383 each coordinate 2-oxoglutarate.

Belongs to the TfdA dioxygenase family. It depends on Fe(2+) as a cofactor.

It participates in organosulfur degradation; alkanesulfonate degradation. Its function is as follows. Acts as an alpha-ketoglutarate-dependent dioxygenase active on sulfonates. Although taurine is a poor substrate, a variety of other sulfonates are utilized, with the best natural substrates being isethionate and taurocholate. The polypeptide is Alpha-ketoglutarate-dependent sulfonate dioxygenase (JLP1) (Saccharomyces cerevisiae (strain ATCC 204508 / S288c) (Baker's yeast)).